A 377-amino-acid polypeptide reads, in one-letter code: Alternative oxidase, mitochondrial (377 aa).

Residues 149-169 traverse the membrane as a helical segment; sequence LSRFIFLESIAAVPGMVAGML. Glutamate 156, glutamate 195, and histidine 198 together coordinate Fe cation. Residues 214-234 form a helical membrane-spanning segment; that stretch reads ILIIGAQGVYFNAMFVAYLIS. Fe cation contacts are provided by glutamate 246, glutamate 303, and histidine 306.

The protein belongs to the alternative oxidase family. Fe cation serves as cofactor.

It is found in the mitochondrion inner membrane. Catalyzes cyanide-resistant oxygen consumption. May increase respiration when the cytochrome respiratory pathway is restricted, or in response to low temperatures. This chain is Alternative oxidase, mitochondrial (AOX1), found in Pyricularia oryzae (strain 70-15 / ATCC MYA-4617 / FGSC 8958) (Rice blast fungus).